The following is a 359-amino-acid chain: Holliday junction branch migration complex subunit RuvB (359 aa).

Positions 1 to 22 (MAIVSSNAEPSKGAPRPKPSRV) are disordered. The interval 13–204 (GAPRPKPSRV…FGLIQRLEFY (192 aa)) is large ATPase domain (RuvB-L). ATP is bound by residues Leu-43, Arg-44, Gly-85, Lys-88, Thr-89, Thr-90, Arg-194, Tyr-204, and Arg-241. Residue Thr-89 participates in Mg(2+) binding. The small ATPAse domain (RuvB-S) stretch occupies residues 205–276 (GQEDLQAIVM…LVDEALTLHR (72 aa)). Positions 279 to 359 (GKGLDASDRR…GWPADEGDAA (81 aa)) are head domain (RuvB-H). 2 residues coordinate DNA: Arg-334 and Arg-339.

Belongs to the RuvB family. In terms of assembly, homohexamer. Forms an RuvA(8)-RuvB(12)-Holliday junction (HJ) complex. HJ DNA is sandwiched between 2 RuvA tetramers; dsDNA enters through RuvA and exits via RuvB. An RuvB hexamer assembles on each DNA strand where it exits the tetramer. Each RuvB hexamer is contacted by two RuvA subunits (via domain III) on 2 adjacent RuvB subunits; this complex drives branch migration. In the full resolvosome a probable DNA-RuvA(4)-RuvB(12)-RuvC(2) complex forms which resolves the HJ.

It is found in the cytoplasm. It carries out the reaction ATP + H2O = ADP + phosphate + H(+). In terms of biological role, the RuvA-RuvB-RuvC complex processes Holliday junction (HJ) DNA during genetic recombination and DNA repair, while the RuvA-RuvB complex plays an important role in the rescue of blocked DNA replication forks via replication fork reversal (RFR). RuvA specifically binds to HJ cruciform DNA, conferring on it an open structure. The RuvB hexamer acts as an ATP-dependent pump, pulling dsDNA into and through the RuvAB complex. RuvB forms 2 homohexamers on either side of HJ DNA bound by 1 or 2 RuvA tetramers; 4 subunits per hexamer contact DNA at a time. Coordinated motions by a converter formed by DNA-disengaged RuvB subunits stimulates ATP hydrolysis and nucleotide exchange. Immobilization of the converter enables RuvB to convert the ATP-contained energy into a lever motion, pulling 2 nucleotides of DNA out of the RuvA tetramer per ATP hydrolyzed, thus driving DNA branch migration. The RuvB motors rotate together with the DNA substrate, which together with the progressing nucleotide cycle form the mechanistic basis for DNA recombination by continuous HJ branch migration. Branch migration allows RuvC to scan DNA until it finds its consensus sequence, where it cleaves and resolves cruciform DNA. The sequence is that of Holliday junction branch migration complex subunit RuvB from Synechococcus sp. (strain CC9311).